A 152-amino-acid chain; its full sequence is Protein E6 (152 aa).

2 zinc fingers span residues 33-69 and 106-142; these read CIFC…CARC and CYMC…CQYC.

This sequence belongs to the papillomaviridae E6 protein family. As to quaternary structure, forms homodimers. Interacts with ubiquitin-protein ligase UBE3A/E6-AP; this interaction stimulates UBE3A ubiquitin activity. Interacts with host TP53 and EP300; this interaction inhibits TP53 activity.

The protein localises to the host cytoplasm. Its subcellular location is the host nucleus. Functionally, plays a major role in the induction and maintenance of cellular transformation. E6 associates with host UBE3A/E6-AP ubiquitin-protein ligase and modulates its activity. Sequesters tumor suppressor TP53 in the host cytoplasm and modulates its activity by interacting with host EP300 that results in the reduction of TP53 acetylation and activation. In turn, apoptosis induced by DNA damage is inhibited. E6 also protects host keratinocytes from apoptosis by mediating the degradation of host BAK1. May also inhibit host immune response. This chain is Protein E6, found in Human papillomavirus 3.